The sequence spans 130 residues: D-ribose pyranase (130 aa).

The Proton donor role is filled by His-20. Substrate is bound by residues Asp-28, His-97, and Tyr-119–Asn-121.

Belongs to the RbsD / FucU family. RbsD subfamily. Homodecamer.

It is found in the cytoplasm. The catalysed reaction is beta-D-ribopyranose = beta-D-ribofuranose. It functions in the pathway carbohydrate metabolism; D-ribose degradation; D-ribose 5-phosphate from beta-D-ribopyranose: step 1/2. Functionally, catalyzes the interconversion of beta-pyran and beta-furan forms of D-ribose. In Lacticaseibacillus casei (strain BL23) (Lactobacillus casei), this protein is D-ribose pyranase.